A 280-amino-acid polypeptide reads, in one-letter code: Ribosomal RNA small subunit methyltransferase A (280 aa).

S-adenosyl-L-methionine contacts are provided by Asn-18, Leu-20, Gly-45, Glu-66, Asp-89, and Asn-110.

The protein belongs to the class I-like SAM-binding methyltransferase superfamily. rRNA adenine N(6)-methyltransferase family. RsmA subfamily.

It is found in the cytoplasm. The enzyme catalyses adenosine(1518)/adenosine(1519) in 16S rRNA + 4 S-adenosyl-L-methionine = N(6)-dimethyladenosine(1518)/N(6)-dimethyladenosine(1519) in 16S rRNA + 4 S-adenosyl-L-homocysteine + 4 H(+). Specifically dimethylates two adjacent adenosines (A1518 and A1519) in the loop of a conserved hairpin near the 3'-end of 16S rRNA in the 30S particle. May play a critical role in biogenesis of 30S subunits. The sequence is that of Ribosomal RNA small subunit methyltransferase A from Cupriavidus necator (strain ATCC 17699 / DSM 428 / KCTC 22496 / NCIMB 10442 / H16 / Stanier 337) (Ralstonia eutropha).